The chain runs to 131 residues: Small ribosomal subunit protein uS8 (131 aa).

Belongs to the universal ribosomal protein uS8 family. As to quaternary structure, part of the 30S ribosomal subunit. Contacts proteins S5 and S12.

Its function is as follows. One of the primary rRNA binding proteins, it binds directly to 16S rRNA central domain where it helps coordinate assembly of the platform of the 30S subunit. In Wolinella succinogenes (strain ATCC 29543 / DSM 1740 / CCUG 13145 / JCM 31913 / LMG 7466 / NCTC 11488 / FDC 602W) (Vibrio succinogenes), this protein is Small ribosomal subunit protein uS8.